A 250-amino-acid chain; its full sequence is Probable transcriptional regulatory protein ROP_68700 (250 aa).

Belongs to the TACO1 family.

The protein localises to the cytoplasm. This Rhodococcus opacus (strain B4) protein is Probable transcriptional regulatory protein ROP_68700.